A 433-amino-acid polypeptide reads, in one-letter code: N-lysine methyltransferase SMYD2 (433 aa).

The SET domain occupies 7-241; the sequence is GGLERFCSPG…PGEEVFTSYI (235 aa). 17–19 is an S-adenosyl-L-methionine binding site; sequence KGR. Residues C52, C55, C65, C68, C74, C78, H86, and C90 each coordinate Zn(2+). Residues 52–90 form an MYND-type zinc finger; sequence CEYCFTRKEGLSKCGRCKQAFYCNVECQKEDWPMHKLEC. Residues H137, 206–207, and 258–260 each bind S-adenosyl-L-methionine; these read NH and YFF. S283 is subject to Phosphoserine.

Belongs to the class V-like SAM-binding methyltransferase superfamily. Interacts with RNA polymerase II and HELZ. Interacts with SIN3A and HDAC1. Interacts (via MYND-type zinc finger) with EPB41L3. Interacts (via SET domain) with p53/TP53. Interacts with RB1 and HSP90AA1.

It localises to the cytoplasm. The protein localises to the cytosol. It is found in the nucleus. The enzyme catalyses L-lysyl(4)-[histone H3] + 3 S-adenosyl-L-methionine = N(6),N(6),N(6)-trimethyl-L-lysyl(4)-[histone H3] + 3 S-adenosyl-L-homocysteine + 3 H(+). The catalysed reaction is L-lysyl-[protein] + S-adenosyl-L-methionine = N(6)-methyl-L-lysyl-[protein] + S-adenosyl-L-homocysteine + H(+). In terms of biological role, protein-lysine N-methyltransferase that methylates both histones and non-histone proteins, including p53/TP53 and RB1. Specifically trimethylates histone H3 'Lys-4' (H3K4me3) in vivo. The activity requires interaction with HSP90alpha. Shows even higher methyltransferase activity on p53/TP53. Monomethylates 'Lys-370' of p53/TP53, leading to decreased DNA-binding activity and subsequent transcriptional regulation activity of p53/TP53. Monomethylates RB1 at 'Lys-860'. The protein is N-lysine methyltransferase SMYD2 (SMYD2) of Homo sapiens (Human).